Consider the following 327-residue polypeptide: Olfactory receptor 226 (327 aa).

Over 1–26 (MERRNHSGRVSEFVLLGFPAPAPLRV) the chain is Extracellular. Residue N5 is glycosylated (N-linked (GlcNAc...) asparagine). A helical membrane pass occupies residues 27 to 50 (LLFFLSLLAYVLVLTENMLIIIAI). At 51 to 58 (RNHPTLHK) the chain is on the cytoplasmic side. Residues 59–80 (PMYFFLANMSFLEIWYVTVTIP) form a helical membrane-spanning segment. The Extracellular segment spans residues 81-104 (KMLAGFIGSKENHGQLISFEACMT). Cysteines 102 and 194 form a disulfide. Residues 105 to 125 (QLYFFLGLGCTECVLLAVMAY) traverse the membrane as a helical segment. The Cytoplasmic portion of the chain corresponds to 126–144 (DRYVAICHPLHYPVIVSSR). The chain crosses the membrane as a helical span at residues 145-163 (LCVQMAAGSWAGGFGISMV). Residues 164-201 (KVFLISRLSYCGPNTINHFFCDVSPLLNLSCTDMSTAE) are Extracellular-facing. Residues 202 to 224 (LTDFVLAIFILLGPLSVTGASYM) form a helical membrane-spanning segment. Residues 225-241 (AITGAVMRIPSAAGRHK) are Cytoplasmic-facing. The helical transmembrane segment at 242–265 (AFSTCASHLTVVIIFYAASIFIYA) threads the bilayer. Residues 266–277 (RPKALSAFDTNK) lie on the Extracellular side of the membrane. Residues 278–297 (LVSVLYAVIVPLFNPIIYCL) form a helical membrane-spanning segment. The Cytoplasmic segment spans residues 298–327 (RNQDVKRALRRTLHLAQDQEANTNKGSKNG).

The protein belongs to the G-protein coupled receptor 1 family. In terms of tissue distribution, olfactory epithelium.

It localises to the cell membrane. Functionally, odorant receptor. This chain is Olfactory receptor 226 (Olr226), found in Rattus norvegicus (Rat).